The following is a 101-amino-acid chain: NADH-quinone oxidoreductase subunit K (101 aa).

A run of 3 helical transmembrane segments spans residues 5–25, 30–50, and 62–82; these read PNWYLALSAVLFTIGTFGVLF, IVVLMSVELMLNAVNLTLVTF, and LVFFSIAVAAAEAAVGLAIVI.

The protein belongs to the complex I subunit 4L family. In terms of assembly, NDH-1 is composed of 14 different subunits. Subunits NuoA, H, J, K, L, M, N constitute the membrane sector of the complex.

Its subcellular location is the cell inner membrane. The enzyme catalyses a quinone + NADH + 5 H(+)(in) = a quinol + NAD(+) + 4 H(+)(out). Functionally, NDH-1 shuttles electrons from NADH, via FMN and iron-sulfur (Fe-S) centers, to quinones in the respiratory chain. The immediate electron acceptor for the enzyme in this species is believed to be a menaquinone. Couples the redox reaction to proton translocation (for every two electrons transferred, four hydrogen ions are translocated across the cytoplasmic membrane), and thus conserves the redox energy in a proton gradient. This chain is NADH-quinone oxidoreductase subunit K, found in Salinibacter ruber (strain DSM 13855 / M31).